We begin with the raw amino-acid sequence, 439 residues long: tRNA modification GTPase MnmE (439 aa).

(6S)-5-formyl-5,6,7,8-tetrahydrofolate is bound by residues Arg26, Glu88, and Arg127. One can recognise a TrmE-type G domain in the interval 220-367 (GARLALIGRP…LRDAIHTALI (148 aa)). Position 230 (Asn230) interacts with K(+). GTP-binding positions include 230–235 (NAGKSS), 249–255 (TPIPGTT), and 274–277 (DTAG). Ser234 contributes to the Mg(2+) binding site. The K(+) site is built by Thr249, Ile251, and Thr254. Thr255 contacts Mg(2+). Lys439 lines the (6S)-5-formyl-5,6,7,8-tetrahydrofolate pocket.

It belongs to the TRAFAC class TrmE-Era-EngA-EngB-Septin-like GTPase superfamily. TrmE GTPase family. As to quaternary structure, homodimer. Heterotetramer of two MnmE and two MnmG subunits. Requires K(+) as cofactor.

The protein resides in the cytoplasm. In terms of biological role, exhibits a very high intrinsic GTPase hydrolysis rate. Involved in the addition of a carboxymethylaminomethyl (cmnm) group at the wobble position (U34) of certain tRNAs, forming tRNA-cmnm(5)s(2)U34. This is tRNA modification GTPase MnmE from Deinococcus geothermalis (strain DSM 11300 / CIP 105573 / AG-3a).